We begin with the raw amino-acid sequence, 285 residues long: Zinc transporter ZupT (285 aa).

The next 3 helical transmembrane spans lie at 13-33 (AFLLTLLAGLATGIGSCIAFF), 41-61 (FLCVSLGFSAGVMIYVSMIEM), and 80-100 (WITVISFFAGIAIIALIDKFV). Residues asparagine 153 and glutamate 156 each contribute to the Fe(2+) site. A Zn(2+)-binding site is contributed by glutamate 156. A helical membrane pass occupies residues 160–180 (TFVSALEGASLAIPITIAIAI). Histidine 181 lines the Zn(2+) pocket. 3 residues coordinate Fe(2+): asparagine 182, glutamate 185, and glutamate 214. Glutamate 185 contacts Zn(2+). The next 3 helical transmembrane spans lie at 204 to 224 (FLYSFLSGMSEPIGAIIGYTL), 228 to 248 (IFNDITLGILLSAVAGIMVFI), and 265 to 285 (LAIYGLIAGMVVMAVSLLLFI).

Belongs to the ZIP transporter (TC 2.A.5) family. ZupT subfamily.

The protein localises to the cell membrane. It catalyses the reaction Zn(2+)(in) = Zn(2+)(out). Its function is as follows. Mediates zinc uptake. May also transport other divalent cations. The protein is Zinc transporter ZupT of Clostridium perfringens (strain 13 / Type A).